A 398-amino-acid chain; its full sequence is Glucose-1-phosphate adenylyltransferase (398 aa).

Residues Tyr-100, Gly-165, 180-181 (EK), and Ser-191 each bind alpha-D-glucose 1-phosphate.

It belongs to the bacterial/plant glucose-1-phosphate adenylyltransferase family. In terms of assembly, homotetramer.

The enzyme catalyses alpha-D-glucose 1-phosphate + ATP + H(+) = ADP-alpha-D-glucose + diphosphate. The protein operates within glycan biosynthesis; glycogen biosynthesis. Its function is as follows. Involved in the biosynthesis of ADP-glucose, a building block required for the elongation reactions to produce glycogen. Catalyzes the reaction between ATP and alpha-D-glucose 1-phosphate (G1P) to produce pyrophosphate and ADP-Glc. This is Glucose-1-phosphate adenylyltransferase from Desulfitobacterium hafniense (strain DSM 10664 / DCB-2).